The chain runs to 131 residues: Guanyl-specific ribonuclease F1 (131 aa).

The signal sequence occupies residues 1-25 (MLFFKSIASLAALVSLAVASPIESR). Residue Gln-26 is modified to Pyrrolidone carboxylic acid. Disulfide bonds link Cys-31/Cys-127 and Cys-49/Cys-108. The active site involves His-65. The Proton acceptor role is filled by Glu-83. The Proton donor role is filled by His-116.

The protein belongs to the ribonuclease N1/T1 family.

It carries out the reaction [RNA] containing guanosine + H2O = an [RNA fragment]-3'-guanosine-3'-phosphate + a 5'-hydroxy-ribonucleotide-3'-[RNA fragment].. In Fusarium fujikuroi (Bakanae and foot rot disease fungus), this protein is Guanyl-specific ribonuclease F1.